Reading from the N-terminus, the 84-residue chain is Putative UPF0320 protein YNL337W (84 aa).

This sequence belongs to the UPF0320 family.

This is Putative UPF0320 protein YNL337W from Saccharomyces cerevisiae (strain ATCC 204508 / S288c) (Baker's yeast).